Consider the following 252-residue polypeptide: MSGHTKWHEIRRKKGVLDQRRGQRWTKIARDITIAAREGGGSPDMNFRLRLAIEKAKADNMPADNIQRAIDRGTGVSGEAALEEVTYEGYGPGGIAVIVDAATDNRNRTVSEIRTAFNKNGGTLGEGGSVGWMFDIKGLISIDRTEKTDPDEVTLLAIDADADDVIVNDDAIIVYTEFSKLAAVRDALNEQGLKISTAEKTMLAKTIMEADEATTFQILRLMERLEDLDDVQKVYSNLEVSDELAEKYAEQG.

Belongs to the TACO1 family.

Its subcellular location is the cytoplasm. This is Probable transcriptional regulatory protein Haur_3030 from Herpetosiphon aurantiacus (strain ATCC 23779 / DSM 785 / 114-95).